Reading from the N-terminus, the 385-residue chain is D-alanyl-D-alanine-carboxypeptidase/endopeptidase AmpH (385 aa).

The N-terminal stretch at 1–21 (MKRSLLFSAVLCAASLTSVHA) is a signal peptide.

It belongs to the beta-lactamase family.

Its subcellular location is the cell inner membrane. Inhibited by cefmetazole. Its function is as follows. Hydrolyzes the cross-linked dimers tetrapentapeptide (D45) and tetratetrapeptide (D44). Removes the terminal D-alanine from muropeptides and disaccharide pentapeptide M5 with a C-terminal D-Ala-D-Ala dipeptide. Associated with recycling and remodeling of peptidoglycan (PG). This is D-alanyl-D-alanine-carboxypeptidase/endopeptidase AmpH (ampH) from Escherichia coli O157:H7.